Consider the following 446-residue polypeptide: Tubulin gamma chain (446 aa).

Residue 142–148 (AGGTGSG) participates in GTP binding.

This sequence belongs to the tubulin family.

It localises to the cytoplasm. The protein localises to the cytoskeleton. The protein resides in the microtubule organizing center. Its subcellular location is the spindle pole body. In terms of biological role, tubulin is the major constituent of microtubules. The gamma chain is found at microtubule organizing centers (MTOC) such as the spindle poles or the centrosome, suggesting that it is involved in the minus-end nucleation of microtubule assembly. The protein is Tubulin gamma chain (tug1) of Schizosaccharomyces japonicus (Fission yeast).